The following is a 64-amino-acid chain: Large ribosomal subunit protein bL35 (64 aa).

The protein belongs to the bacterial ribosomal protein bL35 family.

This Coxiella burnetii (strain RSA 493 / Nine Mile phase I) protein is Large ribosomal subunit protein bL35.